Here is a 1253-residue protein sequence, read N- to C-terminus: Cytoplasmic FMR1-interacting protein 1 homolog (1253 aa).

Belongs to the CYFIP family.

It is found in the cytoplasm. It localises to the perinuclear region. The protein resides in the cell projection. Its subcellular location is the lamellipodium. The protein localises to the ruffle. It is found in the synapse. It localises to the synaptosome. Involved in formation of membrane ruffles and lamellipodia protrusions and in axon outgrowth. Binds to F-actin but not to RNA. This is Cytoplasmic FMR1-interacting protein 1 homolog from Danio rerio (Zebrafish).